A 570-amino-acid chain; its full sequence is Glutamate--tRNA ligase, chloroplastic/mitochondrial (570 aa).

The N-terminal 39 residues, 1-39, are a transit peptide targeting the chloroplast and mitochondrion; that stretch reads MASLVYGTPWLRVRSLPELAPAFLRRRQSSLFYCSRRSF. Residue 57 to 59 participates in L-glutamate binding; that stretch reads RFA. Positions 60-70 match the 'HIGH' region motif; it reads PSPTGNLHVGG. His-67 contacts ATP. L-glutamate-binding positions include Glu-93, 245–249, and Arg-263; that span reads YNFCV. ATP is bound by residues Glu-266 and 301–305; that span reads KLSKR. Residues 301–305 carry the 'KMSKS' region motif; the sequence is KLSKR.

The protein belongs to the class-I aminoacyl-tRNA synthetase family. Glutamate--tRNA ligase type 1 subfamily.

The protein resides in the plastid. It localises to the chloroplast. It is found in the mitochondrion. It catalyses the reaction tRNA(Glu) + L-glutamate + ATP = L-glutamyl-tRNA(Glu) + AMP + diphosphate. Its function is as follows. Catalyzes the attachment of glutamate to tRNA(Glu) in a two-step reaction: glutamate is first activated by ATP to form Glu-AMP and then transferred to the acceptor end of tRNA(Glu). The protein is Glutamate--tRNA ligase, chloroplastic/mitochondrial of Arabidopsis thaliana (Mouse-ear cress).